The primary structure comprises 282 residues: (4-alkanoyl-5-oxo-2,5-dihydrofuran-3-yl)methyl phosphate reductase (282 aa).

An NADP(+)-binding site is contributed by 6–11; sequence GATGAV.

This sequence belongs to the NmrA-type oxidoreductase family.

The catalysed reaction is a [(3S,4R)-4-alkanoyl-5-oxooxolan-3-yl]methyl phosphate + NADP(+) = a (4-alkanoyl-5-oxo-2,5-dihydrofuran-3-yl)methyl phosphate + NADPH + H(+). The enzyme catalyses [(3S,4R)-4-(6-methylheptanoyl)-5-oxooxolan-3-yl]methyl phosphate + NADP(+) = [4-(6-methylheptanoyl)-5-oxo-2H-furan-3-yl]methyl phosphate + NADPH + H(+). Functionally, involved in the biosynthesis of A factor (2-isocapryloyl-3R-hydroxymethyl-gamma-butyrolactone), a gamma-butyrolactone autoregulator that triggers secondary metabolism and morphogenesis in Streptomyces. Catalyzes the reduction of the butenolide phosphate produced by nonenzymatic intramolecular condensation of the 8-methyl-3-oxononanoyl-DHAP ester. The polypeptide is (4-alkanoyl-5-oxo-2,5-dihydrofuran-3-yl)methyl phosphate reductase (Streptomyces griseus subsp. griseus (strain JCM 4626 / CBS 651.72 / NBRC 13350 / KCC S-0626 / ISP 5235)).